The following is a 208-amino-acid chain: MGEPAFTSFPSLPVLGKLKRNMMPWALQKKREIHMAKAHRRRAARSALPMRLTSCIFRRPVTRIRSHPDNQVRRRKGDEHLEKPQQLCAYRRLQALQPCSSQGEGSSPLHLESVLSILAPGTAGESLDRAGAERVRSPLEPTPGRFPAVAGGPTPGMGCQLPPPLSGQLVTPADIRRQARRVKKARERLAKALQADRLARRAEMLTGG.

The tract at residues 1–89 (MGEPAFTSFP…HLEKPQQLCA (89 aa)) is interacts with MBD3.

The protein belongs to the MBD3L family. In terms of assembly, interacts (via N-terminus) with MBD3; the interaction is direct. Interacts with MTA1. Interacts with HDAC1. Interacts with HDAC2. Interacts with RBBP4. Interacts with RBBP7. As to expression, detected at low levels in several somatic tissues. Highly expressed in the ovarian teratocarcinoma cell line PA-1.

The protein resides in the nucleus. May displace the NuRD complex from chromatin. This is Methyl-CpG-binding domain protein 3-like 2 (MBD3L2) from Homo sapiens (Human).